The chain runs to 134 residues: RxLR effector protein Avh238 (134 aa).

Positions 1 to 21 (MRGVFFVAVAVAIFARSSAEA) are cleaved as a signal peptide. A RxLR-dEER motif is present at residues 44–68 (RFLRVADSEDDDLAAPADDGKTEER). The disordered stretch occupies residues 50–72 (DSEDDDLAAPADDGKTEERAPKF). Residues 61–70 (DDGKTEERAP) are compositionally biased toward basic and acidic residues.

Belongs to the RxLR effector family.

It is found in the secreted. The protein localises to the host cytoplasm. The protein resides in the host nucleus. In terms of biological role, effector that, due to the lack of a histidine residue at position 79, is not able to induce cell death in tomato, tobacco, eggplant, potato, or in A.thaliana. This is RxLR effector protein Avh238 from Phytophthora sojae (Soybean stem and root rot agent).